Consider the following 678-residue polypeptide: DNA ligase (678 aa).

Residues 34-38 (DSEYD), 83-84 (SL), and glutamate 114 each bind NAD(+). The active-site N6-AMP-lysine intermediate is lysine 116. 4 residues coordinate NAD(+): arginine 137, glutamate 176, lysine 293, and lysine 317. Cysteine 411, cysteine 414, cysteine 429, and cysteine 435 together coordinate Zn(2+). The BRCT domain maps to 594–678 (PTRQPLNGES…LMAGYGQTLS (85 aa)).

This sequence belongs to the NAD-dependent DNA ligase family. LigA subfamily. Mg(2+) is required as a cofactor. Requires Mn(2+) as cofactor.

It catalyses the reaction NAD(+) + (deoxyribonucleotide)n-3'-hydroxyl + 5'-phospho-(deoxyribonucleotide)m = (deoxyribonucleotide)n+m + AMP + beta-nicotinamide D-nucleotide.. DNA ligase that catalyzes the formation of phosphodiester linkages between 5'-phosphoryl and 3'-hydroxyl groups in double-stranded DNA using NAD as a coenzyme and as the energy source for the reaction. It is essential for DNA replication and repair of damaged DNA. The protein is DNA ligase of Acinetobacter baumannii (strain SDF).